A 384-amino-acid polypeptide reads, in one-letter code: N-acetylneuraminate epimerase (384 aa).

The signal sequence occupies residues 1–24; the sequence is MMKTKYLLLPLLASSSLLSHMAFA. Kelch repeat units lie at residues 46-90, 92-145, 147-184, 185-230, 233-281, 303-352, and 354-383; these read KVYV…TVVG, NIFV…YSPD, KQVL…KIVD, DYMG…VIDG, ITLI…IAGA, AQFE…SVKG, and VLMV…IDIV. Catalysis depends on Glu239, which acts as the Proton acceptor.

It belongs to the NanM family. In terms of assembly, homodimer.

The protein localises to the periplasm. The catalysed reaction is N-acetyl-alpha-neuraminate = N-acetyl-beta-neuraminate. Converts alpha-N-acetylneuranimic acid (Neu5Ac) to the beta-anomer, accelerating the equilibrium between the alpha- and beta-anomers. Probably facilitates sialidase-negative bacteria to compete successfully for limited amounts of extracellular Neu5Ac, which is likely taken up in the beta-anomer. In addition, the rapid removal of sialic acid from solution might be advantageous to the bacterium to damp down host responses. The protein is N-acetylneuraminate epimerase of Vibrio vulnificus (strain YJ016).